A 165-amino-acid chain; its full sequence is Cytochrome c-type biogenesis protein CcmE (165 aa).

Residues 1–7 (MTRKQRR) lie on the Cytoplasmic side of the membrane. A helical; Signal-anchor for type II membrane protein membrane pass occupies residues 8 to 28 (LMMIGGAGVVLVVAVGLVLNA). The Periplasmic portion of the chain corresponds to 29 to 165 (MRGSIVFFST…ASADAMRPAR (137 aa)). Residues H122 and Y126 each contribute to the heme site. Over residues 138 to 149 (QGHWKDDYEKKP) the composition is skewed to basic and acidic residues. Positions 138–165 (QGHWKDDYEKKPPGPGAAASADAMRPAR) are disordered. The segment covering 153–165 (GAAASADAMRPAR) has biased composition (low complexity).

This sequence belongs to the CcmE/CycJ family.

The protein localises to the cell inner membrane. Its function is as follows. Heme chaperone required for the biogenesis of c-type cytochromes. Transiently binds heme delivered by CcmC and transfers the heme to apo-cytochromes in a process facilitated by CcmF and CcmH. This is Cytochrome c-type biogenesis protein CcmE from Rhodopseudomonas palustris (strain HaA2).